The primary structure comprises 396 residues: Putative T-box protein 39 (396 aa).

Residues 11-192 constitute a DNA-binding region (T-box); it reads MAEEDRWKQW…KNSTYGNRLD (182 aa). The segment at 185–215 is disordered; sequence STYGNRLDGGNKRKNTDSSEERTSKRSKNET. Over residues 193–215 the composition is skewed to basic and acidic residues; it reads GGNKRKNTDSSEERTSKRSKNET.

It is found in the nucleus. This chain is Putative T-box protein 39 (tbx-39), found in Caenorhabditis elegans.